A 342-amino-acid polypeptide reads, in one-letter code: Cytosolic Fe-S cluster assembly factor NBP35 (342 aa).

A disordered region spans residues 16-42; that stretch reads SKAAPKLVAPEPEHCPGPESEQAGKGD. Residues C30, C44, C47, and C53 each coordinate [4Fe-4S] cluster. 83 to 90 serves as a coordination point for ATP; the sequence is GKGGVGKS. C256 and C259 together coordinate [4Fe-4S] cluster.

Belongs to the Mrp/NBP35 ATP-binding proteins family. NUBP1/NBP35 subfamily. In terms of assembly, heterotetramer of 2 NBP35 and 2 CFD1 chains. The cofactor is [4Fe-4S] cluster.

It is found in the cytoplasm. Component of the cytosolic iron-sulfur (Fe/S) protein assembly (CIA) machinery. Required for maturation of extramitochondrial Fe-S proteins. The NBP35-CFD1 heterotetramer forms a Fe-S scaffold complex, mediating the de novo assembly of an Fe-S cluster and its transfer to target apoproteins. In Coccidioides immitis (strain RS) (Valley fever fungus), this protein is Cytosolic Fe-S cluster assembly factor NBP35.